We begin with the raw amino-acid sequence, 152 residues long: Sec-independent protein translocase protein TatB (152 aa).

A helical transmembrane segment spans residues 1-21; that stretch reads MFGISFSELLLVGLVALLVLG. Residues 98–115 show a composition bias toward low complexity; sequence HAPGAATVAEAPPASEVP. Positions 98 to 152 are disordered; that stretch reads HAPGAATVAEAPPASEVPAPLPSTPAPAPTAEPAAPVATPATTAPHDSTLPPRAP. Residues 116-127 show a composition bias toward pro residues; sequence APLPSTPAPAPT. The segment covering 128–142 has biased composition (low complexity); the sequence is AEPAAPVATPATTAP.

The protein belongs to the TatB family. In terms of assembly, the Tat system comprises two distinct complexes: a TatABC complex, containing multiple copies of TatA, TatB and TatC subunits, and a separate TatA complex, containing only TatA subunits. Substrates initially bind to the TatABC complex, which probably triggers association of the separate TatA complex to form the active translocon.

The protein resides in the cell inner membrane. Functionally, part of the twin-arginine translocation (Tat) system that transports large folded proteins containing a characteristic twin-arginine motif in their signal peptide across membranes. Together with TatC, TatB is part of a receptor directly interacting with Tat signal peptides. TatB may form an oligomeric binding site that transiently accommodates folded Tat precursor proteins before their translocation. This Pseudomonas fluorescens (strain ATCC BAA-477 / NRRL B-23932 / Pf-5) protein is Sec-independent protein translocase protein TatB.